A 133-amino-acid chain; its full sequence is Nickel-responsive regulator (133 aa).

The Ni(2+) site is built by His-76, His-87, His-89, and Cys-95.

The protein belongs to the transcriptional regulatory CopG/NikR family. As to quaternary structure, homotetramer. It depends on Ni(2+) as a cofactor.

In terms of biological role, transcriptional repressor of the nikABCDE operon. Is active in the presence of excessive concentrations of intracellular nickel. This is Nickel-responsive regulator from Escherichia coli (strain SMS-3-5 / SECEC).